Reading from the N-terminus, the 361-residue chain is MKKKVLVAMSGGVDSSVAAAILKEEGYEVYGATMQIWQNECGEELITGKSCCSIYAVDDARKVANILDIPYYVFNMKDDFRKIVIDYFIDEYIKGRTPNPCIMCNRKIKFELFLKKAIAIGMDYIATGHYAIIEYDSSLNRYLLKRSKAKEKDQTYVLYNMTQEMLSKTLFPLGRFSKDEVRKLAEKFKLPVAKKPDSQEICFIPDNNYGKFIEKETGIREDGVYVDTEGNILGKSKAYYNYTIGQRKGLGISTGKRMYVVAIKPEENKVVLGEEGKIFADALIATDLNFIPFDKLESEIEVTAKIRYTAKEAKAKIVPMENNKVLVKFYEKQRAITPGQSVVFYNNDIVVGGGIIEKALV.

ATP-binding positions include 8–15 and M34; that span reads AMSGGVDS. Catalysis depends on C104, which acts as the Nucleophile. Cysteines 104 and 202 form a disulfide. Position 128 (G128) interacts with ATP. The interaction with tRNA stretch occupies residues 152–154; that stretch reads KDQ. The active-site Cysteine persulfide intermediate is the C202. The interval 307-308 is interaction with tRNA; the sequence is RY.

It belongs to the MnmA/TRMU family.

The protein localises to the cytoplasm. It carries out the reaction S-sulfanyl-L-cysteinyl-[protein] + uridine(34) in tRNA + AH2 + ATP = 2-thiouridine(34) in tRNA + L-cysteinyl-[protein] + A + AMP + diphosphate + H(+). Its function is as follows. Catalyzes the 2-thiolation of uridine at the wobble position (U34) of tRNA, leading to the formation of s(2)U34. The chain is tRNA-specific 2-thiouridylase MnmA from Caldicellulosiruptor saccharolyticus (strain ATCC 43494 / DSM 8903 / Tp8T 6331).